A 457-amino-acid polypeptide reads, in one-letter code: Secreted RxLR effector protein 8 (457 aa).

The first 19 residues, 1 to 19, serve as a signal peptide directing secretion; it reads MRGTLATALLLVISSRVAT. Residues 48 to 69 carry the RxLR-dEER motif; sequence RFLRGSRKQRDDLAPTAADENR. A glycan (N-linked (GlcNAc...) asparagine) is linked at Asn-68. Disordered regions lie at residues 110 to 188 and 398 to 457; these read RLSL…ALKS and RQTI…RSSS. Residues 135 to 152 show a composition bias toward low complexity; sequence SASTSTTSDIATSSSRTS. Polar residues-rich tracts occupy residues 153–163 and 176–187; these read NQRTPKTQASL and SKNQFKKSTALK. Over residues 442 to 457 the composition is skewed to basic residues; sequence IKSKDHARKKRPRSSS.

Belongs to the RxLR effector family.

It is found in the secreted. The protein resides in the host nucleus. Functionally, secreted effector that completely suppresses the host cell death induced by cell death-inducing proteins. The sequence is that of Secreted RxLR effector protein 8 from Plasmopara viticola (Downy mildew of grapevine).